Reading from the N-terminus, the 169-residue chain is Der GTPase-activating protein YihI (169 aa).

Disordered stretches follow at residues 1 to 100 (MKPS…AELE) and 144 to 169 (GLSYDDDEEEEEDEKQEDMMRLLRGN). A compositionally biased stretch (basic residues) spans 10 to 19 (SKGHAKARRK). Basic and acidic residues predominate over residues 20–30 (TREELDQEARD). Basic residues predominate over residues 31–40 (RKRQKKRRGH). Polar residues predominate over residues 49-58 (GNTTSGSKGQ). Residues 147–159 (YDDDEEEEEDEKQ) are compositionally biased toward acidic residues. Over residues 160-169 (EDMMRLLRGN) the composition is skewed to basic and acidic residues.

Belongs to the YihI family. In terms of assembly, interacts with Der.

Functionally, a GTPase-activating protein (GAP) that modifies Der/EngA GTPase function. May play a role in ribosome biogenesis. This is Der GTPase-activating protein YihI from Escherichia coli O6:H1 (strain CFT073 / ATCC 700928 / UPEC).